Reading from the N-terminus, the 298-residue chain is Palmitoyl-protein thioesterase 1 (298 aa).

The signal sequence occupies residues 1 to 16 (MRYFPLLLCLLAITTA). The N-linked (GlcNAc...) asparagine glycan is linked to asparagine 20. 3 disulfides stabilise this stretch: cysteine 37-cysteine 38, cysteine 88-cysteine 120, and cysteine 144-cysteine 151. The active-site Nucleophile is the serine 107. Aspartate 224 is a catalytic residue. N-linked (GlcNAc...) asparagine glycosylation occurs at asparagine 250. Histidine 280 is an active-site residue.

The protein belongs to the palmitoyl-protein thioesterase family.

The catalysed reaction is S-hexadecanoyl-L-cysteinyl-[protein] + H2O = L-cysteinyl-[protein] + hexadecanoate + H(+). In terms of biological role, removes thioester-linked fatty acyl groups such as palmitate (hexadecanoate) from modified cysteine residues in proteins or peptides. This chain is Palmitoyl-protein thioesterase 1 (ppt-1), found in Caenorhabditis elegans.